A 361-amino-acid chain; its full sequence is Queuine tRNA-ribosyltransferase (361 aa).

Residue Asp-92 is the Proton acceptor of the active site. Residues 92–96 (DSGGF), Asp-146, Gln-189, and Gly-216 each bind substrate. The RNA binding stretch occupies residues 247–253 (GVGKPAD). Asp-266 serves as the catalytic Nucleophile. The interval 271 to 275 (TRSGR) is RNA binding; important for wobble base 34 recognition. Zn(2+)-binding residues include Cys-304, Cys-306, Cys-309, and His-335.

Belongs to the queuine tRNA-ribosyltransferase family. As to quaternary structure, homodimer. Within each dimer, one monomer is responsible for RNA recognition and catalysis, while the other monomer binds to the replacement base PreQ1. Zn(2+) serves as cofactor.

It carries out the reaction 7-aminomethyl-7-carbaguanine + guanosine(34) in tRNA = 7-aminomethyl-7-carbaguanosine(34) in tRNA + guanine. The protein operates within tRNA modification; tRNA-queuosine biosynthesis. Catalyzes the base-exchange of a guanine (G) residue with the queuine precursor 7-aminomethyl-7-deazaguanine (PreQ1) at position 34 (anticodon wobble position) in tRNAs with GU(N) anticodons (tRNA-Asp, -Asn, -His and -Tyr). Catalysis occurs through a double-displacement mechanism. The nucleophile active site attacks the C1' of nucleotide 34 to detach the guanine base from the RNA, forming a covalent enzyme-RNA intermediate. The proton acceptor active site deprotonates the incoming PreQ1, allowing a nucleophilic attack on the C1' of the ribose to form the product. After dissociation, two additional enzymatic reactions on the tRNA convert PreQ1 to queuine (Q), resulting in the hypermodified nucleoside queuosine (7-(((4,5-cis-dihydroxy-2-cyclopenten-1-yl)amino)methyl)-7-deazaguanosine). This chain is Queuine tRNA-ribosyltransferase, found in Rickettsia rickettsii (strain Iowa).